We begin with the raw amino-acid sequence, 316 residues long: Pantothenate kinase (316 aa).

ATP is bound at residue 95-102 (GSVSVGKS).

The protein belongs to the prokaryotic pantothenate kinase family.

It is found in the cytoplasm. The enzyme catalyses (R)-pantothenate + ATP = (R)-4'-phosphopantothenate + ADP + H(+). It functions in the pathway cofactor biosynthesis; coenzyme A biosynthesis; CoA from (R)-pantothenate: step 1/5. This chain is Pantothenate kinase, found in Haemophilus ducreyi (strain 35000HP / ATCC 700724).